A 409-amino-acid chain; its full sequence is LL-diaminopimelate aminotransferase (409 aa).

Residues Tyr-15 and Gly-42 each contribute to the substrate site. Residues Tyr-72, 108–109 (SK), Tyr-132, Asn-187, Tyr-218, and 246–248 (SFS) each bind pyridoxal 5'-phosphate. Lys-109, Tyr-132, and Asn-187 together coordinate substrate. At Lys-249 the chain carries N6-(pyridoxal phosphate)lysine. Arg-257 and Asn-292 together coordinate pyridoxal 5'-phosphate. Substrate is bound by residues Asn-292 and Arg-388.

This sequence belongs to the class-I pyridoxal-phosphate-dependent aminotransferase family. LL-diaminopimelate aminotransferase subfamily. As to quaternary structure, homodimer. The cofactor is pyridoxal 5'-phosphate.

The enzyme catalyses (2S,6S)-2,6-diaminopimelate + 2-oxoglutarate = (S)-2,3,4,5-tetrahydrodipicolinate + L-glutamate + H2O + H(+). Its pathway is amino-acid biosynthesis; L-lysine biosynthesis via DAP pathway; LL-2,6-diaminopimelate from (S)-tetrahydrodipicolinate (aminotransferase route): step 1/1. In terms of biological role, involved in the synthesis of meso-diaminopimelate (m-DAP or DL-DAP), required for both lysine and peptidoglycan biosynthesis. Catalyzes the direct conversion of tetrahydrodipicolinate to LL-diaminopimelate. This chain is LL-diaminopimelate aminotransferase, found in Acaryochloris marina (strain MBIC 11017).